Consider the following 212-residue polypeptide: Pyridoxine/pyridoxamine 5'-phosphate oxidase (212 aa).

Residues 8-11 and K66 each bind substrate; that span reads RREY. FMN-binding positions include 61–66, 76–77, R82, K83, and Q105; these read RIVLLK and FT. Residues Y123, R127, and S131 each contribute to the substrate site. Residues 140-141 and W185 contribute to the FMN site; that span reads QS. 191–193 is a substrate binding site; it reads RLH. R195 lines the FMN pocket.

It belongs to the pyridoxamine 5'-phosphate oxidase family. Homodimer. FMN serves as cofactor.

The enzyme catalyses pyridoxamine 5'-phosphate + O2 + H2O = pyridoxal 5'-phosphate + H2O2 + NH4(+). It carries out the reaction pyridoxine 5'-phosphate + O2 = pyridoxal 5'-phosphate + H2O2. It functions in the pathway cofactor metabolism; pyridoxal 5'-phosphate salvage; pyridoxal 5'-phosphate from pyridoxamine 5'-phosphate: step 1/1. It participates in cofactor metabolism; pyridoxal 5'-phosphate salvage; pyridoxal 5'-phosphate from pyridoxine 5'-phosphate: step 1/1. Its function is as follows. Catalyzes the oxidation of either pyridoxine 5'-phosphate (PNP) or pyridoxamine 5'-phosphate (PMP) into pyridoxal 5'-phosphate (PLP). This chain is Pyridoxine/pyridoxamine 5'-phosphate oxidase, found in Shewanella oneidensis (strain ATCC 700550 / JCM 31522 / CIP 106686 / LMG 19005 / NCIMB 14063 / MR-1).